The chain runs to 2448 residues: Non-reducing polyketide synthase mapC (2448 aa).

The segment at 14–226 is N-terminal acylcarrier protein transacylase domain (SAT); sequence VLFGPQCPDI…HHEAHREGIQ (213 aa). The segment at 330-350 is disordered; sequence GFSNESPQPSTASLSNSVQTF. The Ketosynthase family 3 (KS3) domain maps to 359-775; it reads ASPIAITGMA…GSNAALIVKE (417 aa). Catalysis depends on for beta-ketoacyl synthase activity residues C524, H659, and H698. The interval 885–1188 is malonyl-CoA:ACP transacylase (MAT) domain; it reads LCFGGQNGLT…HKIDLGGSSG (304 aa). The For acyl/malonyl transferase activity role is filled by S972. The interval 1256–1388 is N-terminal hotdog fold; that stretch reads GQEAGLLCQL…GTVCLHQERS (133 aa). In terms of domain architecture, PKS/mFAS DH spans 1256-1565; sequence GQEAGLLCQL…FTSVSIRSLT (310 aa). The tract at residues 1261 to 1564 is product template (PT) domain; that stretch reads LLCQLSESPD…RFTSVSIRSL (304 aa). H1290 acts as the Proton acceptor; for dehydratase activity in catalysis. The segment at 1414-1565 is C-terminal hotdog fold; it reads ASNGLKGSTV…FTSVSIRSLT (152 aa). D1471 (proton donor; for dehydratase activity) is an active-site residue. Residues 1610–1684 form the Carrier domain; that stretch reads AKDLATVQEM…GLVEHIFPGH (75 aa). S1644 is modified (O-(pantetheine 4'-phosphoryl)serine). Positions 1841–2076 are methyltransferase (CMeT) domain; sequence PYALEHDLLQ…GFEWVDWTNN (236 aa). Catalysis depends on for thioesterase activity residues S2227, D2385, and H2417.

The protein localises to the cytoplasm. It is found in the cytosol. It catalyses the reaction 3 malonyl-CoA + acetyl-CoA + S-adenosyl-L-methionine + H(+) = 5-methylorsellinate + S-adenosyl-L-homocysteine + 3 CO2 + 4 CoA. Its pathway is secondary metabolite biosynthesis; terpenoid biosynthesis. Non-reducing polyketide synthase; part of the gene cluster that mediates the biosynthesis of mycophenolic acid (MPA), the first isolated antibiotic natural product in the world obtained from a culture of Penicillium brevicompactum in 1893. MpaC catalyzes the synthesis of 5-methylorsellinic acid (5MOA) via the condensation of 1 acetyl-CoA starter unit with 3 malonyl-CoA units and one methylation step. The first step of the pathway is the synthesis of 5-methylorsellinic acid (5MOA) by the cytosolic polyketide synthase mpaC. 5MOA is then converted to the phthalide compound 5,7-dihydroxy-4,6-dimethylphthalide (DHMP) by the endoplasmic reticulum-bound cytochrome P450 monooxygenase mpaDE. MpaDE first catalyzes hydroxylation of 5-MOA to 4,6-dihydroxy-2-(hydroxymethyl)-3-methylbenzoic acid (DHMB). MpaDE then acts as a lactone synthase that catalyzes the ring closure to convert DHMB into DHMP. The next step is the prenylation of DHMP by the Golgi apparatus-associated prenyltransferase mpaA to yield farnesyl-DHMP (FDHMP). The ER-bound oxygenase mpaB then mediates the oxidative cleavage the C19-C20 double bond in FDHMP to yield FDHMP-3C via a mycophenolic aldehyde intermediate. The O-methyltransferase mpaG catalyzes the methylation of FDHMP-3C to yield MFDHMP-3C. After the cytosolic methylation of FDHMP-3C, MFDHMP-3C enters into peroxisomes probably via free diffusion due to its low molecular weight. Upon a peroxisomal CoA ligation reaction, catalyzed by a beta-oxidation component enzyme acyl-CoA ligase ACL891, MFDHMP-3C-CoA would then be restricted to peroxisomes for the following beta-oxidation pathway steps. The peroxisomal beta-oxidation machinery than converts MFDHMP-3C-CoA into MPA_CoA, via a beta-oxidation chain-shortening process. Finally mpaH acts as a peroxisomal acyl-CoA hydrolase with high substrate specificity toward MPA-CoA to release the final product MPA. In Penicillium brevicompactum, this protein is Non-reducing polyketide synthase mapC.